The chain runs to 115 residues: MPKANNAVASKARRKRVLKKAKGFWGSRGNILTVVKHAVDKAEQYAYRDRRVKKRTFRSLWIMRINAAARLNGTTYSRMINAMLKKNVEIDRKALAEIAVKDPAAFTVIVKSLFE.

Belongs to the bacterial ribosomal protein bL20 family.

Binds directly to 23S ribosomal RNA and is necessary for the in vitro assembly process of the 50S ribosomal subunit. It is not involved in the protein synthesizing functions of that subunit. In Pelodictyon phaeoclathratiforme (strain DSM 5477 / BU-1), this protein is Large ribosomal subunit protein bL20.